The primary structure comprises 228 residues: Uracil-DNA glycosylase (228 aa).

The active-site Proton acceptor is aspartate 64.

This sequence belongs to the uracil-DNA glycosylase (UDG) superfamily. UNG family. As to quaternary structure, monomer.

The protein resides in the cytoplasm. It carries out the reaction Hydrolyzes single-stranded DNA or mismatched double-stranded DNA and polynucleotides, releasing free uracil.. Excises uracil residues from the DNA which can arise as a result of misincorporation of dUMP residues by DNA polymerase or due to deamination of cytosine. This is Uracil-DNA glycosylase from Escherichia coli O6:H1 (strain CFT073 / ATCC 700928 / UPEC).